The chain runs to 208 residues: Thymidylate kinase (208 aa).

10–17 is an ATP binding site; sequence GPEGSGKT.

It belongs to the thymidylate kinase family.

It catalyses the reaction dTMP + ATP = dTDP + ADP. Its function is as follows. Phosphorylation of dTMP to form dTDP in both de novo and salvage pathways of dTTP synthesis. The protein is Thymidylate kinase of Bacillus cereus (strain 03BB102).